Consider the following 379-residue polypeptide: Ribosomal RNA large subunit methyltransferase G (379 aa).

The protein belongs to the methyltransferase superfamily. RlmG family.

It localises to the cytoplasm. The catalysed reaction is guanosine(1835) in 23S rRNA + S-adenosyl-L-methionine = N(2)-methylguanosine(1835) in 23S rRNA + S-adenosyl-L-homocysteine + H(+). Specifically methylates the guanine in position 1835 (m2G1835) of 23S rRNA. This Serratia proteamaculans (strain 568) protein is Ribosomal RNA large subunit methyltransferase G.